The chain runs to 140 residues: Ribosome-binding factor A (140 aa).

A compositionally biased stretch (basic residues) spans 1–13; the sequence is MQKKSSSKSHRAT. A disordered region spans residues 1–22; the sequence is MQKKSSSKSHRATRGPSQRQLR.

This sequence belongs to the RbfA family. In terms of assembly, monomer. Binds 30S ribosomal subunits, but not 50S ribosomal subunits or 70S ribosomes.

The protein localises to the cytoplasm. In terms of biological role, one of several proteins that assist in the late maturation steps of the functional core of the 30S ribosomal subunit. Associates with free 30S ribosomal subunits (but not with 30S subunits that are part of 70S ribosomes or polysomes). Required for efficient processing of 16S rRNA. May interact with the 5'-terminal helix region of 16S rRNA. This chain is Ribosome-binding factor A, found in Parvibaculum lavamentivorans (strain DS-1 / DSM 13023 / NCIMB 13966).